A 116-amino-acid polypeptide reads, in one-letter code: MSVETFTPTGLEFTHGAAQKVKNLVNEEGNERLKLRVFVTGGGCSGFQYGFTFDEDVAEDDTIVEREGVSLVVDPMSFQYLAGAEVDYQEGLEGSRFVIKNPNAATTCGCGSSFSI.

C44, C108, and C110 together coordinate iron-sulfur cluster.

The protein belongs to the HesB/IscA family. As to quaternary structure, homodimer. It depends on iron-sulfur cluster as a cofactor.

Required for insertion of 4Fe-4S clusters for at least IspG. The protein is Iron-sulfur cluster insertion protein ErpA of Pseudomonas putida (strain ATCC 47054 / DSM 6125 / CFBP 8728 / NCIMB 11950 / KT2440).